The following is a 346-amino-acid chain: Histidinol-phosphate aminotransferase (346 aa).

At Lys209 the chain carries N6-(pyridoxal phosphate)lysine.

Belongs to the class-II pyridoxal-phosphate-dependent aminotransferase family. Histidinol-phosphate aminotransferase subfamily. In terms of assembly, homodimer. Pyridoxal 5'-phosphate is required as a cofactor.

It catalyses the reaction L-histidinol phosphate + 2-oxoglutarate = 3-(imidazol-4-yl)-2-oxopropyl phosphate + L-glutamate. It functions in the pathway amino-acid biosynthesis; L-histidine biosynthesis; L-histidine from 5-phospho-alpha-D-ribose 1-diphosphate: step 7/9. This chain is Histidinol-phosphate aminotransferase, found in Vibrio vulnificus (strain YJ016).